Here is a 415-residue protein sequence, read N- to C-terminus: Type II methyltransferase M.DdeI (415 aa).

One can recognise an SAM-dependent MTase C5-type domain in the interval 1–373 (MNIIDLFAGC…ERISWYFENI (373 aa)). Cys-76 is an active-site residue.

The protein belongs to the class I-like SAM-binding methyltransferase superfamily. C5-methyltransferase family.

The enzyme catalyses a 2'-deoxycytidine in DNA + S-adenosyl-L-methionine = a 5-methyl-2'-deoxycytidine in DNA + S-adenosyl-L-homocysteine + H(+). In terms of biological role, a methylase that recognizes the double-stranded sequence 5'-CTNAG-3', methylates C-1 on both strands, and protects the DNA from cleavage by the DdeI endonuclease. The polypeptide is Type II methyltransferase M.DdeI (ddeIM) (Desulfomicrobium norvegicum (strain DSM 1741 / NCIMB 8310) (Desulfovibrio baculatus (strain Norway 4))).